Here is a 638-residue protein sequence, read N- to C-terminus: Protein disulfide-isomerase A4 (638 aa).

The first 20 residues, M1–A20, serve as a signal peptide directing secretion. 2 consecutive Thioredoxin domains span residues A21 to Q162 and Q162 to K294. The segment at A24–E50 is disordered. Over residues S32 to E50 the composition is skewed to acidic residues. N-linked (GlcNAc...) asparagine glycosylation is present at N36. A CXXC motif is present at residues C84–C87. 2 disulfides stabilise this stretch: C84–C87 and C199–C202. At K359 the chain carries N6-acetyllysine. The Thioredoxin 3 domain maps to F498–T629. The CXXC motif lies at C548 to C551. C548 and C551 form a disulfide bridge. Positions K635–L638 match the Prevents secretion from ER motif.

It belongs to the protein disulfide isomerase family. Part of a large chaperone multiprotein complex comprising DNAJB11, HSP90B1, HSPA5, HYOU, PDIA2, PDIA4, PDIA6, PPIB, SDF2L1, UGGT1 and very small amounts of ERP29, but not, or at very low levels, CALR nor CANX. Component of a complex containing at least CRELD2, MANF, MATN3 and PDIA4.

Its subcellular location is the endoplasmic reticulum lumen. It is found in the melanosome. The catalysed reaction is Catalyzes the rearrangement of -S-S- bonds in proteins.. The protein is Protein disulfide-isomerase A4 (Pdia4) of Mus musculus (Mouse).